Reading from the N-terminus, the 370-residue chain is tRNA (guanine(9)-/adenine(9)-N1)-methyltransferase (370 aa).

The SAM-dependent MTase TRM10-type domain occupies T87 to Y292.

It belongs to the class IV-like SAM-binding methyltransferase superfamily. TRM10 family.

The protein resides in the cytoplasm. It catalyses the reaction adenosine(9) in tRNA + S-adenosyl-L-methionine = N(1)-methyladenosine(9) in tRNA + S-adenosyl-L-homocysteine + H(+). The catalysed reaction is guanosine(9) in tRNA + S-adenosyl-L-methionine = N(1)-methylguanosine(9) in tRNA + S-adenosyl-L-homocysteine + H(+). In terms of biological role, catalyzes the S-adenosyl-L-methionine-dependent formation of either N(1)-methyladenine or N(1)-methylguanine at position 9 (m1A9 or m1G9) in tRNA. The protein is tRNA (guanine(9)-/adenine(9)-N1)-methyltransferase of Thermococcus kodakarensis (strain ATCC BAA-918 / JCM 12380 / KOD1) (Pyrococcus kodakaraensis (strain KOD1)).